Reading from the N-terminus, the 240-residue chain is UDP-2,3-diacylglucosamine hydrolase (240 aa).

Residues aspartate 8, histidine 10, aspartate 41, asparagine 78, and histidine 113 each coordinate Mn(2+). Substrate is bound at residue 78–79 (NR). Residues aspartate 121, serine 159, asparagine 163, lysine 166, and histidine 194 each contribute to the substrate site. Mn(2+)-binding residues include histidine 194 and histidine 196.

Belongs to the LpxH family. Mn(2+) serves as cofactor.

It localises to the cell inner membrane. It carries out the reaction UDP-2-N,3-O-bis[(3R)-3-hydroxytetradecanoyl]-alpha-D-glucosamine + H2O = 2-N,3-O-bis[(3R)-3-hydroxytetradecanoyl]-alpha-D-glucosaminyl 1-phosphate + UMP + 2 H(+). Its pathway is glycolipid biosynthesis; lipid IV(A) biosynthesis; lipid IV(A) from (3R)-3-hydroxytetradecanoyl-[acyl-carrier-protein] and UDP-N-acetyl-alpha-D-glucosamine: step 4/6. In terms of biological role, hydrolyzes the pyrophosphate bond of UDP-2,3-diacylglucosamine to yield 2,3-diacylglucosamine 1-phosphate (lipid X) and UMP by catalyzing the attack of water at the alpha-P atom. Involved in the biosynthesis of lipid A, a phosphorylated glycolipid that anchors the lipopolysaccharide to the outer membrane of the cell. This chain is UDP-2,3-diacylglucosamine hydrolase, found in Shewanella baltica (strain OS195).